The chain runs to 143 residues: uncharacterized protein (143 aa).

Residues 1–21 are disordered; the sequence is MAAMDTGQRADPSNPGDKEGD.

This is an uncharacterized protein from Homo sapiens (Human).